The sequence spans 669 residues: DNA ligase (669 aa).

Residues 34–38 (DAEYD), 83–84 (SL), and Glu117 each bind NAD(+). Catalysis depends on Lys119, which acts as the N6-AMP-lysine intermediate. The NAD(+) site is built by Arg140, Glu177, Lys293, and Lys317. Residues Cys411, Cys414, Cys429, and Cys434 each contribute to the Zn(2+) site. One can recognise a BRCT domain in the interval 591–669 (RLGGRFTGKT…EDEFLKMLEG (79 aa)).

It belongs to the NAD-dependent DNA ligase family. LigA subfamily. The cofactor is Mg(2+). Mn(2+) serves as cofactor.

It carries out the reaction NAD(+) + (deoxyribonucleotide)n-3'-hydroxyl + 5'-phospho-(deoxyribonucleotide)m = (deoxyribonucleotide)n+m + AMP + beta-nicotinamide D-nucleotide.. Its function is as follows. DNA ligase that catalyzes the formation of phosphodiester linkages between 5'-phosphoryl and 3'-hydroxyl groups in double-stranded DNA using NAD as a coenzyme and as the energy source for the reaction. It is essential for DNA replication and repair of damaged DNA. This Geotalea daltonii (strain DSM 22248 / JCM 15807 / FRC-32) (Geobacter daltonii) protein is DNA ligase.